Here is a 133-residue protein sequence, read N- to C-terminus: Small ribosomal subunit protein uS8 (133 aa).

This sequence belongs to the universal ribosomal protein uS8 family. In terms of assembly, part of the 30S ribosomal subunit. Contacts proteins S5 and S12.

In terms of biological role, one of the primary rRNA binding proteins, it binds directly to 16S rRNA central domain where it helps coordinate assembly of the platform of the 30S subunit. The chain is Small ribosomal subunit protein uS8 from Chlamydia trachomatis serovar L2b (strain UCH-1/proctitis).